A 227-amino-acid polypeptide reads, in one-letter code: Probable methylthioribulose-1-phosphate dehydratase (227 aa).

Cys87 lines the substrate pocket. Zn(2+) contacts are provided by His105 and His107. Glu129 serves as the catalytic Proton donor/acceptor. His185 is a Zn(2+) binding site.

The protein belongs to the aldolase class II family. MtnB subfamily. Requires Zn(2+) as cofactor.

The protein localises to the cytoplasm. It carries out the reaction 5-(methylsulfanyl)-D-ribulose 1-phosphate = 5-methylsulfanyl-2,3-dioxopentyl phosphate + H2O. It participates in amino-acid biosynthesis; L-methionine biosynthesis via salvage pathway; L-methionine from S-methyl-5-thio-alpha-D-ribose 1-phosphate: step 2/6. In terms of biological role, catalyzes the dehydration of methylthioribulose-1-phosphate (MTRu-1-P) into 2,3-diketo-5-methylthiopentyl-1-phosphate (DK-MTP-1-P). The polypeptide is Probable methylthioribulose-1-phosphate dehydratase (Drosophila melanogaster (Fruit fly)).